A 491-amino-acid chain; its full sequence is Glutamyl-tRNA(Gln) amidotransferase subunit A (491 aa).

Active-site charge relay system residues include lysine 77 and serine 152. Serine 176 serves as the catalytic Acyl-ester intermediate.

Belongs to the amidase family. GatA subfamily. In terms of assembly, heterotrimer of A, B and C subunits.

It catalyses the reaction L-glutamyl-tRNA(Gln) + L-glutamine + ATP + H2O = L-glutaminyl-tRNA(Gln) + L-glutamate + ADP + phosphate + H(+). Functionally, allows the formation of correctly charged Gln-tRNA(Gln) through the transamidation of misacylated Glu-tRNA(Gln) in organisms which lack glutaminyl-tRNA synthetase. The reaction takes place in the presence of glutamine and ATP through an activated gamma-phospho-Glu-tRNA(Gln). This Chlamydia abortus (strain DSM 27085 / S26/3) (Chlamydophila abortus) protein is Glutamyl-tRNA(Gln) amidotransferase subunit A.